Reading from the N-terminus, the 715-residue chain is Polyribonucleotide nucleotidyltransferase (715 aa).

Mg(2+) contacts are provided by D493 and D499. The KH domain occupies 560-619 (PRMITVKINPEKIRDVIGKGGSVIRALTEETGTTIDISDDGVVTIASTSSEGMAEAKKRI). Residues 629–697 (GQVYEGTVLK…EKGRVRLSAK (69 aa)) form the S1 motif domain.

Belongs to the polyribonucleotide nucleotidyltransferase family. The cofactor is Mg(2+).

It is found in the cytoplasm. It carries out the reaction RNA(n+1) + phosphate = RNA(n) + a ribonucleoside 5'-diphosphate. In terms of biological role, involved in mRNA degradation. Catalyzes the phosphorolysis of single-stranded polyribonucleotides processively in the 3'- to 5'-direction. The protein is Polyribonucleotide nucleotidyltransferase of Burkholderia orbicola (strain MC0-3).